A 275-amino-acid polypeptide reads, in one-letter code: Methyltransferase str2 (275 aa).

Belongs to the methyltransferase superfamily. LaeA methyltransferase family.

It functions in the pathway mycotoxin biosynthesis. Functionally, methyltransferase; part of the gene cluster that mediates the biosynthesis of strobilurin A, an antifungal polyketide that contains a key beta-methoxyacrylate toxophore that targets the complex III of the mitochondrial electron transport chain. Strobilurin biosynthesis begins with construction of benzoyl CoA by step-wise elimination of ammonia from phenylalanine by the phenylalanine ammonia-lyase str11, oxygenation by str8 and retro-Claisen reaction to form benzoic acid, which is activated to its CoA thiolester benzoyl CoA by the dedicated CoA ligase str10. Benzoyl CoA forms the starter unit for the highly reducing polyketide synthase stpks1 that produces the polyketide prestrobilutin A. The FAD-dependent oxygenase str9 then catalyzes the key oxidative rearrangement responsible for the creation of the beta-methoxyacrylate toxophore. Str9 performs epoxidation of the 2,3 olefin of prestrobilutin A, followed by Meinwald rearrangement to furnish the aldehyde intermediate. Rapid enolization of the aldehyde intermediate would give the beta-methoxyacrylate skeleton and methylations catalyzed by str2 and str3 complete the synthesis and lead to the production of strobilurin A. The short-chain dehydrogenase stl2 and the dehydrogenase str4 play a role in the shunt pathway leading to the production of bolineol. The cluster encodes no obvious halogenase gene that could be involved in production of strobilurin B, nor any obvious dimethylallyl-transferase that could be involved in the production of strobilurin G. It is possible that unknown proteins encoded in, or near, the cluster (such as str1 or stl1) may form new classes of halogenases or dimethylally-transferases, or that the responsible genes are located elsewhere on the genome. Similarly, proteins encoded by str5/str6 hydrolases appear to have no chemical role in the biosynthesis of strobilurin A. Finally, no obvious self-resistance gene is found within the cluster. This Strobilurus tenacellus protein is Methyltransferase str2.